Consider the following 242-residue polypeptide: Biosynthetic peptidoglycan transglycosylase (242 aa).

The helical transmembrane segment at 19–39 (LMVVLAIFWGGGIALFSVAPV) threads the bilayer.

This sequence belongs to the glycosyltransferase 51 family.

The protein resides in the cell inner membrane. It carries out the reaction [GlcNAc-(1-&gt;4)-Mur2Ac(oyl-L-Ala-gamma-D-Glu-L-Lys-D-Ala-D-Ala)](n)-di-trans,octa-cis-undecaprenyl diphosphate + beta-D-GlcNAc-(1-&gt;4)-Mur2Ac(oyl-L-Ala-gamma-D-Glu-L-Lys-D-Ala-D-Ala)-di-trans,octa-cis-undecaprenyl diphosphate = [GlcNAc-(1-&gt;4)-Mur2Ac(oyl-L-Ala-gamma-D-Glu-L-Lys-D-Ala-D-Ala)](n+1)-di-trans,octa-cis-undecaprenyl diphosphate + di-trans,octa-cis-undecaprenyl diphosphate + H(+). It functions in the pathway cell wall biogenesis; peptidoglycan biosynthesis. Functionally, peptidoglycan polymerase that catalyzes glycan chain elongation from lipid-linked precursors. The chain is Biosynthetic peptidoglycan transglycosylase from Escherichia coli O45:K1 (strain S88 / ExPEC).